The chain runs to 82 residues: Sulfur carrier protein TusA (82 aa).

Cys19 serves as the catalytic Cysteine persulfide intermediate.

This sequence belongs to the sulfur carrier protein TusA family. Interacts with IscS.

Its subcellular location is the cytoplasm. The protein operates within tRNA modification. In terms of biological role, sulfur carrier protein involved in sulfur trafficking in the cell. Part of a sulfur-relay system required for 2-thiolation during synthesis of 2-thiouridine of the modified wobble base 5-methylaminomethyl-2-thiouridine (mnm(5)s(2)U) in tRNA. Interacts with IscS and stimulates its cysteine desulfurase activity. Accepts an activated sulfur from IscS, which is then transferred to TusD, and thus determines the direction of sulfur flow from IscS to 2-thiouridine formation. Also appears to be involved in sulfur transfer for the biosynthesis of molybdopterin. This is Sulfur carrier protein TusA from Edwardsiella ictaluri (strain 93-146).